The sequence spans 982 residues: Probable DNA-directed RNA polymerase (982 aa).

This sequence belongs to the RNA polymerase beta chain family.

It catalyses the reaction RNA(n) + a ribonucleoside 5'-triphosphate = RNA(n+1) + diphosphate. Functionally, the presence of the two linear plasmids, termed pGKL1 and pGKL2, in strains of Kluyveromyces lactis confers the killer phenotype to the host cell, by promoting the secretion of a toxin able to inhibit the growth of sensitive strains. The sequence is that of Probable DNA-directed RNA polymerase from Kluyveromyces lactis (strain ATCC 8585 / CBS 2359 / DSM 70799 / NBRC 1267 / NRRL Y-1140 / WM37) (Yeast).